The chain runs to 131 residues: uncharacterized protein (131 aa).

This is an uncharacterized protein from Haemophilus influenzae (strain ATCC 51907 / DSM 11121 / KW20 / Rd).